We begin with the raw amino-acid sequence, 153 residues long: SsrA-binding protein (153 aa).

It belongs to the SmpB family.

The protein resides in the cytoplasm. In terms of biological role, required for rescue of stalled ribosomes mediated by trans-translation. Binds to transfer-messenger RNA (tmRNA), required for stable association of tmRNA with ribosomes. tmRNA and SmpB together mimic tRNA shape, replacing the anticodon stem-loop with SmpB. tmRNA is encoded by the ssrA gene; the 2 termini fold to resemble tRNA(Ala) and it encodes a 'tag peptide', a short internal open reading frame. During trans-translation Ala-aminoacylated tmRNA acts like a tRNA, entering the A-site of stalled ribosomes, displacing the stalled mRNA. The ribosome then switches to translate the ORF on the tmRNA; the nascent peptide is terminated with the 'tag peptide' encoded by the tmRNA and targeted for degradation. The ribosome is freed to recommence translation, which seems to be the essential function of trans-translation. The chain is SsrA-binding protein from Pelotomaculum thermopropionicum (strain DSM 13744 / JCM 10971 / SI).